A 211-amino-acid polypeptide reads, in one-letter code: tRNA (pseudouridine(54)-N(1))-methyltransferase (211 aa).

L128, G150, and C183 together coordinate S-adenosyl-L-methionine.

Belongs to the methyltransferase superfamily. TrmY family. As to quaternary structure, homodimer.

The protein resides in the cytoplasm. The enzyme catalyses pseudouridine(54) in tRNA + S-adenosyl-L-methionine = N(1)-methylpseudouridine(54) in tRNA + S-adenosyl-L-homocysteine + H(+). In terms of biological role, specifically catalyzes the N1-methylation of pseudouridine at position 54 (Psi54) in tRNAs. In Methanosarcina acetivorans (strain ATCC 35395 / DSM 2834 / JCM 12185 / C2A), this protein is tRNA (pseudouridine(54)-N(1))-methyltransferase.